The following is a 344-amino-acid chain: Hypoxia-inducible factor 1-alpha inhibitor (344 aa).

Ala-2 carries the post-translational modification N-acetylalanine. The JmjC domain maps to 133 to 303 (GRVYLQQTLN…PKRIEYPLKA (171 aa)). Tyr-136 is a 2-oxoglutarate binding site. Residues Asp-143 and 173-174 (LT) each bind substrate. Thr-187 lines the 2-oxoglutarate pocket. Residues His-190 and Asp-192 each contribute to the Fe cation site. 192–194 (DEQ) lines the substrate pocket. Asn-196 and Lys-205 together coordinate 2-oxoglutarate. 229–230 (RQ) serves as a coordination point for substrate. Residue His-270 participates in Fe cation binding. Asn-285 serves as a coordination point for 2-oxoglutarate. Substrate contacts are provided by Ala-291 and Asn-312.

Homodimer; homodimerization is essential for catalytic activity. Requires Fe(2+) as cofactor.

It is found in the nucleus. The protein localises to the cytoplasm. Its subcellular location is the perinuclear region. The enzyme catalyses L-asparaginyl-[hypoxia-inducible factor alpha subunit] + 2-oxoglutarate + O2 = (3S)-3-hydroxy-L-asparaginyl-[hypoxia-inducible factor alpha subunit] + succinate + CO2. It catalyses the reaction L-histidyl-[ankyrin-repeat domain protein] + 2-oxoglutarate + O2 = (3S)-3-hydroxy-L-histidyl-[ankyrin-repeat domain protein] + succinate + CO2. It carries out the reaction L-asparaginyl-[ankyrin-repeat domain protein] + 2-oxoglutarate + O2 = (3S)-3-hydroxy-L-asparaginyl-[ankyrin-repeat domain protein] + succinate + CO2. The catalysed reaction is L-aspartyl-[ankyrin-repeat domain protein] + 2-oxoglutarate + O2 = (3S)-3-hydroxy-L-aspartyl-[ankyrin-repeat domain protein] + succinate + CO2. Functionally, hydroxylates a specific Asn residue in the C-terminal transactivation domain (CAD) of HIF-1 alpha. The hydroxylation prevents interaction of HIF-1 with transcriptional coactivators. Also hydroxylates specific Asn, Asp and His residues within ankyrin repeat domain-containing proteins. The polypeptide is Hypoxia-inducible factor 1-alpha inhibitor (hif1an) (Danio rerio (Zebrafish)).